The following is a 580-amino-acid chain: Extracellular protease (580 aa).

A signal peptide spans M1–A32. Residues G33–T136 constitute a propeptide that is removed on maturation. A Peptidase S8 domain is found at Q147–V465. Catalysis depends on charge relay system residues D177 and H237. Disulfide bonds link C225–C273 and C315–C352. The active-site Charge relay system is S409. A disulfide bridge connects residues C450 and C454.

Belongs to the peptidase S8 family.

It is found in the secreted. In Xanthomonas campestris pv. campestris (strain ATCC 33913 / DSM 3586 / NCPPB 528 / LMG 568 / P 25), this protein is Extracellular protease.